The chain runs to 106 residues: 1-deoxy-D-xylulose 5-phosphate reductoisomerase (106 aa).

D3 is a binding site for Mn(2+). Positions 4, 5, 29, 52, 65, 70, 71, and 74 each coordinate 1-deoxy-D-xylulose 5-phosphate. E5 is a binding site for Mn(2+). Position 74 (E74) interacts with Mn(2+).

Belongs to the DXR family. Requires Mn(2+) as cofactor. It depends on Mg(2+) as a cofactor.

It localises to the plastid. The protein localises to the chloroplast stroma. It catalyses the reaction 2-C-methyl-D-erythritol 4-phosphate + NADP(+) = 1-deoxy-D-xylulose 5-phosphate + NADPH + H(+). Its pathway is isoprenoid biosynthesis; isopentenyl diphosphate biosynthesis via DXP pathway; isopentenyl diphosphate from 1-deoxy-D-xylulose 5-phosphate: step 1/6. Enzyme of the plastid non-mevalonate pathway for isoprenoid biosynthesis that catalyzes the NADPH-dependent rearrangement and reduction of 1-deoxy-D-xylulose-5-phosphate (DXP) to 2-C-methyl-D-erythritol 4-phosphate (MEP). Required for chloroplast development. This is 1-deoxy-D-xylulose 5-phosphate reductoisomerase from Origanum vulgare (Wild marjoram).